The sequence spans 272 residues: Ribonuclease 3 (272 aa).

The segment covering 1–20 (MTDDVTNVEQPSTASEQQPQ) has biased composition (polar residues). Residues 1 to 38 (MTDDVTNVEQPSTASEQQPQDVPAAEPSAAKKRRANKA) form a disordered region. The 128-residue stretch at 44-171 (AAAIEQRLGH…VIGAIYLDGG (128 aa)) folds into the RNase III domain. Glutamate 84 contributes to the Mg(2+) binding site. Aspartate 88 is a catalytic residue. Mg(2+)-binding residues include aspartate 157 and glutamate 160. The active site involves glutamate 160. Residues 196-265 (DPKTVLQEWA…ASAMLAREGV (70 aa)) enclose the DRBM domain.

Belongs to the ribonuclease III family. As to quaternary structure, homodimer. The cofactor is Mg(2+).

It localises to the cytoplasm. The catalysed reaction is Endonucleolytic cleavage to 5'-phosphomonoester.. Functionally, digests double-stranded RNA. Involved in the processing of primary rRNA transcript to yield the immediate precursors to the large and small rRNAs (23S and 16S). Processes some mRNAs, and tRNAs when they are encoded in the rRNA operon. Processes pre-crRNA and tracrRNA of type II CRISPR loci if present in the organism. The sequence is that of Ribonuclease 3 from Rhodopseudomonas palustris (strain ATCC BAA-98 / CGA009).